The chain runs to 124 residues: Small ribosomal subunit protein uS12 (124 aa).

A disordered region spans residues 1 to 30 (MPTIQQLVRKGRTPKVTKTKAPALKANPQQ). A compositionally biased stretch (basic residues) spans 9–18 (RKGRTPKVTK).

The protein belongs to the universal ribosomal protein uS12 family. In terms of assembly, part of the 30S ribosomal subunit. Contacts proteins S8 and S17. May interact with IF1 in the 30S initiation complex.

Its function is as follows. With S4 and S5 plays an important role in translational accuracy. Functionally, interacts with and stabilizes bases of the 16S rRNA that are involved in tRNA selection in the A site and with the mRNA backbone. Located at the interface of the 30S and 50S subunits, it traverses the body of the 30S subunit contacting proteins on the other side and probably holding the rRNA structure together. The combined cluster of proteins S8, S12 and S17 appears to hold together the shoulder and platform of the 30S subunit. This is Small ribosomal subunit protein uS12 from Leifsonia xyli subsp. xyli (strain CTCB07).